A 152-amino-acid chain; its full sequence is Deoxyuridine 5'-triphosphate nucleotidohydrolase (152 aa).

Substrate is bound by residues 71 to 73 (RSG), Asn84, 88 to 90 (LID), and Met98.

Belongs to the dUTPase family. Mg(2+) serves as cofactor.

It catalyses the reaction dUTP + H2O = dUMP + diphosphate + H(+). It functions in the pathway pyrimidine metabolism; dUMP biosynthesis; dUMP from dCTP (dUTP route): step 2/2. In terms of biological role, this enzyme is involved in nucleotide metabolism: it produces dUMP, the immediate precursor of thymidine nucleotides and it decreases the intracellular concentration of dUTP so that uracil cannot be incorporated into DNA. The polypeptide is Deoxyuridine 5'-triphosphate nucleotidohydrolase (Coxiella burnetii (strain RSA 331 / Henzerling II)).